Here is a 249-residue protein sequence, read N- to C-terminus: ATP synthase subunit a (249 aa).

5 helical membrane-spanning segments follow: residues Ile-35–Leu-55, Val-92–Val-112, Ile-131–Ser-151, Leu-187–Ile-209, and Ser-221–Glu-241.

This sequence belongs to the ATPase A chain family. As to quaternary structure, F-type ATPases have 2 components, CF(1) - the catalytic core - and CF(0) - the membrane proton channel. CF(1) has five subunits: alpha(3), beta(3), gamma(1), delta(1), epsilon(1). CF(0) has four main subunits: a, b, b' and c.

It localises to the cellular thylakoid membrane. Functionally, key component of the proton channel; it plays a direct role in the translocation of protons across the membrane. The sequence is that of ATP synthase subunit a from Trichodesmium erythraeum (strain IMS101).